The chain runs to 299 residues: Glutamyl-Q tRNA(Asp) synthetase (299 aa).

L-glutamate-binding positions include arginine 18–serine 22 and glutamate 54. The short motif at proline 21 to serine 31 is the 'HIGH' region element. Residues cysteine 110, cysteine 112, tyrosine 124, and cysteine 128 each contribute to the Zn(2+) site. Tyrosine 181 and arginine 199 together coordinate L-glutamate. Residues lysine 237–glutamine 241 carry the 'KMSKS' region motif. Lysine 240 is an ATP binding site.

This sequence belongs to the class-I aminoacyl-tRNA synthetase family. GluQ subfamily. It depends on Zn(2+) as a cofactor.

Functionally, catalyzes the tRNA-independent activation of glutamate in presence of ATP and the subsequent transfer of glutamate onto a tRNA(Asp). Glutamate is transferred on the 2-amino-5-(4,5-dihydroxy-2-cyclopenten-1-yl) moiety of the queuosine in the wobble position of the QUC anticodon. In Shewanella oneidensis (strain ATCC 700550 / JCM 31522 / CIP 106686 / LMG 19005 / NCIMB 14063 / MR-1), this protein is Glutamyl-Q tRNA(Asp) synthetase.